The chain runs to 71 residues: UPF0434 protein Meso_3270 (71 aa).

It belongs to the UPF0434 family.

The polypeptide is UPF0434 protein Meso_3270 (Chelativorans sp. (strain BNC1)).